Reading from the N-terminus, the 156-residue chain is Ribosomally synthesized cyclic peptide victorin precursosr vicA1 (156 aa).

A signal peptide spans 1 to 21 (MVRITALMSGSILLFALQALA). 7 consecutive propeptides follow at residues 22–36 (MPVETTSVEPAAEKR), 43–55 (KRGEEVEPAEEKR), 62–74 (KRGEEVEPAEEKR), 81–93 (KRGEEVEPAEEKR), 100–112 (KRGEEVEPAEEKR), 119–131 (KRGEEVEPAEEKR), and 138–150 (KRGEEVEPAEEKR).

Post-translationally, vicA1 is processed by several endopeptidases including kexin proteases as well as the cluster-specific peptidases vicP1 and vicP2 to produce 7 identical copies of the hexapeptide Gly-Leu-Lys-Leu-Ala-Phe, that are further modified to yield victorins. After being excised from the precursor peptide, the core peptides are cyclized and modified post-translationally by enzymes encoded within the gene cluster. The ustYa family protein vicYb is required for the formation of the macrocycle in victorin and the copper amine oxidases (CAOs) vicK1 and vicK2 are responsible for converting victorin to the active form by oxidizing the N-terminal glycyl residue in the peptides to glyoxylate. Relaxed substrate specificity of enzymes in the victorin biosynthetic pathway results in a metabolic grid that produces a set of analogs including victorinines B, C, E or HV-toxin M.

It participates in mycotoxin biosynthesis. In terms of biological role, ribosomally synthesized cyclic peptide victorin precursor, part of the gene cluster that mediates the biosynthesis of the secondary metabolite victorin, the molecular basis for Victoria blight of oats. The vicA1 translated product contains a 7-fold repeated peptide embedding the hexapeptide Gly-Leu-Lys-Leu-Ala-Phe, that is converted into the cyclic victorin. The sequence is that of Ribosomally synthesized cyclic peptide victorin precursosr vicA1 from Bipolaris victoriae (strain FI3) (Victoria blight of oats agent).